Here is a 291-residue protein sequence, read N- to C-terminus: MAGMKEIRGKIKSVQNTRKITKAMEMVAASKMRRAQERMRAARPYADKVRAIAAHMSRANPEYRHPFMVANEGAKTAGIILVTTDKGLCGGLNTNVLRASVQKFKELEEKGQKVEATAIGGKGLGFLNRFGAKVLSQVVHLGDTPHLDKLIGAVKTQLDLYSEGKLSAVYLAYTRFINTMKQEAVIEQLLPLSSEHFEADDGTPATSWDYIYEPDAQAVVDELLVRYVEALVYQAVAENMASEQSARMVAMKAASDNAKTVISELQLVYNKSRQAAITKELSEIVGGAAAV.

The protein belongs to the ATPase gamma chain family. F-type ATPases have 2 components, CF(1) - the catalytic core - and CF(0) - the membrane proton channel. CF(1) has five subunits: alpha(3), beta(3), gamma(1), delta(1), epsilon(1). CF(0) has three main subunits: a, b and c.

The protein localises to the cell inner membrane. Its function is as follows. Produces ATP from ADP in the presence of a proton gradient across the membrane. The gamma chain is believed to be important in regulating ATPase activity and the flow of protons through the CF(0) complex. The chain is ATP synthase gamma chain from Burkholderia multivorans (strain ATCC 17616 / 249).